Reading from the N-terminus, the 567-residue chain is UPF0313 protein TM_0337 (567 aa).

In terms of domain architecture, Radical SAM core spans 288–560 (KAIETVKFSI…NKMKENVLFK (273 aa)). Residues Cys-303, Cys-307, and Cys-310 each contribute to the [4Fe-4S] cluster site.

The protein belongs to the UPF0313 family. [4Fe-4S] cluster is required as a cofactor.

The protein is UPF0313 protein TM_0337 of Thermotoga maritima (strain ATCC 43589 / DSM 3109 / JCM 10099 / NBRC 100826 / MSB8).